The following is a 341-amino-acid chain: 5-formaminoimidazole-4-carboxamide-1-(beta)-D-ribofuranosyl 5'-monophosphate synthetase (341 aa).

His-10 and Thr-77 together coordinate 5-amino-1-(5-phospho-beta-D-ribosyl)imidazole-4-carboxamide. Positions Asp-106–Met-317 constitute an ATP-grasp domain. Residues Glu-132–Tyr-188 and Glu-210 contribute to the ATP site. Asn-238 provides a ligand contact to 5-amino-1-(5-phospho-beta-D-ribosyl)imidazole-4-carboxamide. Mg(2+) is bound by residues Glu-277 and Glu-290.

Belongs to the phosphohexose mutase family. The cofactor is Mg(2+). Mn(2+) is required as a cofactor.

The enzyme catalyses 5-amino-1-(5-phospho-beta-D-ribosyl)imidazole-4-carboxamide + formate + ATP = 5-formamido-1-(5-phospho-D-ribosyl)imidazole-4-carboxamide + ADP + phosphate. It functions in the pathway purine metabolism; IMP biosynthesis via de novo pathway; 5-formamido-1-(5-phospho-D-ribosyl)imidazole-4-carboxamide from 5-amino-1-(5-phospho-D-ribosyl)imidazole-4-carboxamide (formate route): step 1/1. Catalyzes the ATP- and formate-dependent formylation of 5-aminoimidazole-4-carboxamide-1-beta-d-ribofuranosyl 5'-monophosphate (AICAR) to 5-formaminoimidazole-4-carboxamide-1-beta-d-ribofuranosyl 5'-monophosphate (FAICAR) in the absence of folates. This Nitrosopumilus maritimus (strain SCM1) protein is 5-formaminoimidazole-4-carboxamide-1-(beta)-D-ribofuranosyl 5'-monophosphate synthetase.